The chain runs to 564 residues: Dihydroxy-acid dehydratase (564 aa).

Residue cysteine 50 coordinates [2Fe-2S] cluster. Aspartate 82 serves as a coordination point for Mg(2+). Cysteine 123 serves as a coordination point for [2Fe-2S] cluster. Residues aspartate 124 and lysine 125 each contribute to the Mg(2+) site. The residue at position 125 (lysine 125) is an N6-carboxylysine. Cysteine 195 contributes to the [2Fe-2S] cluster binding site. A Mg(2+)-binding site is contributed by glutamate 447. Serine 473 serves as the catalytic Proton acceptor.

This sequence belongs to the IlvD/Edd family. As to quaternary structure, homodimer. It depends on [2Fe-2S] cluster as a cofactor. The cofactor is Mg(2+).

The enzyme catalyses (2R)-2,3-dihydroxy-3-methylbutanoate = 3-methyl-2-oxobutanoate + H2O. The catalysed reaction is (2R,3R)-2,3-dihydroxy-3-methylpentanoate = (S)-3-methyl-2-oxopentanoate + H2O. The protein operates within amino-acid biosynthesis; L-isoleucine biosynthesis; L-isoleucine from 2-oxobutanoate: step 3/4. Its pathway is amino-acid biosynthesis; L-valine biosynthesis; L-valine from pyruvate: step 3/4. In terms of biological role, functions in the biosynthesis of branched-chain amino acids. Catalyzes the dehydration of (2R,3R)-2,3-dihydroxy-3-methylpentanoate (2,3-dihydroxy-3-methylvalerate) into 2-oxo-3-methylpentanoate (2-oxo-3-methylvalerate) and of (2R)-2,3-dihydroxy-3-methylbutanoate (2,3-dihydroxyisovalerate) into 2-oxo-3-methylbutanoate (2-oxoisovalerate), the penultimate precursor to L-isoleucine and L-valine, respectively. This is Dihydroxy-acid dehydratase from Chloroflexus aggregans (strain MD-66 / DSM 9485).